Consider the following 796-residue polypeptide: Pathogenesis-related homeodomain protein (796 aa).

2 disordered regions span residues Lys34 to Cys57 and Val80 to Val99. The span at Lys81–Arg90 shows a compositional bias: basic residues. The PHD-type zinc finger occupies His190 to Lys247. Disordered regions lie at residues Ser282 to Ser347, Leu393 to Val422, and Asn511 to Glu736. Positions Trp292 to Asp303 are enriched in acidic residues. The homeobox DNA-binding region spans Gly452–Asn511. 2 stretches are compositionally biased toward polar residues: residues Glu538–Gln547 and Ala560–Cys569. Low complexity predominate over residues Asn570–Asn580. Residues Val581–Ser600 are compositionally biased toward polar residues. Tandem repeats lie at residues Pro605–Glu631, Pro632–Glu658, Pro659–Glu685, and Pro686–Glu712. The 5 X 27 AA tandem repeats stretch occupies residues Pro605 to Glu735. 3 stretches are compositionally biased toward basic and acidic residues: residues Thr624–Leu636, Ala645–Leu690, and Val700–Thr733. The 5; truncated repeat unit spans residues Ser713–Glu735. The leucine-zipper stretch occupies residues Leu738 to Leu759.

It belongs to the PHD-associated homeobox family.

It localises to the nucleus. In terms of biological role, specifically binds to the fungal elicitor-responsive DNA element, 5'-CTAATTGTTTA-3', of the gene PR2 promoter. This is Pathogenesis-related homeodomain protein (PRH) from Arabidopsis thaliana (Mouse-ear cress).